Here is a 141-residue protein sequence, read N- to C-terminus: Hemoglobin subunit alpha-2 (141 aa).

Ser-1 is modified (N-acetylserine). The Globin domain occupies 1 to 141 (SLSTKDKETV…LARALSEKYR (141 aa)). His-59 is a binding site for O2. Residue His-88 participates in heme b binding.

Belongs to the globin family. In terms of assembly, hb2 is a heterotetramer of two alpha-2 chains and two beta chains. In terms of tissue distribution, red blood cells.

Functionally, involved in oxygen transport from gills to the various peripheral tissues. The polypeptide is Hemoglobin subunit alpha-2 (hba2) (Notothenia angustata (Rockcod)).